The sequence spans 43 residues: Photosystem I reaction center subunit IX (43 aa).

Residues 7–27 (YLSTAPVLATFWFGLLAGLLI) form a helical membrane-spanning segment.

Belongs to the PsaJ family.

It is found in the plastid. It localises to the chloroplast thylakoid membrane. Its function is as follows. May help in the organization of the PsaE and PsaF subunits. This chain is Photosystem I reaction center subunit IX, found in Gnetum parvifolium (Small-leaved jointfir).